Reading from the N-terminus, the 515-residue chain is Ribonuclease Y (515 aa).

A helical membrane pass occupies residues 6 to 26 (LTSFVIITLSLAVGLTGGYYG). The KH domain maps to 205-290 (TVSVVPLPND…EMVEKARKEI (86 aa)). The HD domain occupies 331–424 (VLRHSVEVAH…VQAADAISAS (94 aa)).

Belongs to the RNase Y family.

It is found in the cell membrane. Functionally, endoribonuclease that initiates mRNA decay. In Syntrophomonas wolfei subsp. wolfei (strain DSM 2245B / Goettingen), this protein is Ribonuclease Y.